The sequence spans 199 residues: NAD(P)H dehydrogenase (quinone) (199 aa).

The Flavodoxin-like domain maps to 4-190 (VLVLYYSTYG…AGARHQGELV (187 aa)). FMN-binding positions include 10–15 (STYGHL) and 78–80 (TRF). Tyr-12 contributes to the NAD(+) binding site. Position 98 (Trp-98) interacts with substrate. Residues 113 to 119 (STATQHG) and His-134 each bind FMN.

It belongs to the WrbA family. FMN is required as a cofactor.

The enzyme catalyses a quinone + NADH + H(+) = a quinol + NAD(+). The catalysed reaction is a quinone + NADPH + H(+) = a quinol + NADP(+). The polypeptide is NAD(P)H dehydrogenase (quinone) (Azorhizobium caulinodans (strain ATCC 43989 / DSM 5975 / JCM 20966 / LMG 6465 / NBRC 14845 / NCIMB 13405 / ORS 571)).